A 177-amino-acid chain; its full sequence is Thymidine kinase (177 aa).

11-18 (GPMFSGKS) provides a ligand contact to ATP. E83 serves as the catalytic Proton acceptor. F113 provides a ligand contact to substrate. The Zn(2+) site is built by C138 and C141. Residue 157–161 (IEIIG) participates in substrate binding. The Zn(2+) site is built by C170 and C173.

It belongs to the thymidine kinase family. In terms of assembly, homotetramer. Two molecules of substrate bind to each enzyme tetramer.

The catalysed reaction is thymidine + ATP = dTMP + ADP + H(+). In terms of biological role, phosphorylates thymidine and thymidine analogs, such as azidothymidine (AZT). Part of the salvage pathway for pyrimidine deoxyribonucleotide synthesis. This is Thymidine kinase (OPG101) from Cynomys gunnisoni (Gunnison's prairie dog).